The sequence spans 132 residues: Small ribosomal subunit protein uS8 (132 aa).

Belongs to the universal ribosomal protein uS8 family. As to quaternary structure, part of the 30S ribosomal subunit. Contacts proteins S5 and S12.

In terms of biological role, one of the primary rRNA binding proteins, it binds directly to 16S rRNA central domain where it helps coordinate assembly of the platform of the 30S subunit. This chain is Small ribosomal subunit protein uS8, found in Francisella tularensis subsp. holarctica (strain FTNF002-00 / FTA).